Here is a 728-residue protein sequence, read N- to C-terminus: Probable 3',5'-cyclic phosphodiesterase pde-5 (728 aa).

Residues 214 to 371 (SMDAVIIKVM…HHAKLYDKIR (158 aa)) enclose the GAF domain. Residues 390–709 (CNADEVNKLK…KKWEELAEEQ (320 aa)) form the PDEase domain. The active-site Proton donor is the histidine 465. Positions 469, 503, 504, and 614 each coordinate a divalent metal cation. Residues 691–728 (MRERCEYNAKKWEELAEEQRKKQEALAQQNGEANETQE) adopt a coiled-coil conformation. The interval 708-728 (EQRKKQEALAQQNGEANETQE) is disordered. Residues 716–728 (LAQQNGEANETQE) show a composition bias toward polar residues.

The protein belongs to the cyclic nucleotide phosphodiesterase family. A divalent metal cation serves as cofactor.

The catalysed reaction is a nucleoside 3',5'-cyclic phosphate + H2O = a nucleoside 5'-phosphate + H(+). Its function is as follows. Redundantly with pde-1, plays a role in the AFD thermosensory neurons to regulate microvilli receptive ending morphology, possibly by regulating cGMP levels. The polypeptide is Probable 3',5'-cyclic phosphodiesterase pde-5 (pde-5) (Caenorhabditis elegans).